Consider the following 177-residue polypeptide: RNA pyrophosphohydrolase (177 aa).

One can recognise a Nudix hydrolase domain in the interval 6-149; the sequence is GYRPNVGIVI…KRDVYRRVMK (144 aa). The short motif at 38 to 59 is the Nudix box element; that stretch reads GGINPGESPEQAMYRELFEEVG.

This sequence belongs to the Nudix hydrolase family. RppH subfamily. A divalent metal cation is required as a cofactor.

In terms of biological role, accelerates the degradation of transcripts by removing pyrophosphate from the 5'-end of triphosphorylated RNA, leading to a more labile monophosphorylated state that can stimulate subsequent ribonuclease cleavage. The polypeptide is RNA pyrophosphohydrolase (Pectobacterium atrosepticum (strain SCRI 1043 / ATCC BAA-672) (Erwinia carotovora subsp. atroseptica)).